A 482-amino-acid chain; its full sequence is G-protein coupled receptor 37-like 1 (482 aa).

The N-terminal stretch at 1–25 is a signal peptide; sequence MRWLWPLGVSLAVALAAGPERAPRG. 2 disordered regions span residues 25–56 and 78–119; these read GVWLQQGGHQPVAQEQPDRSRRGAEREDAKGL and PTQP…VQNP. Topologically, residues 26-134 are extracellular; the sequence is VWLQQGGHQP…ERSYGAYAVL (109 aa). A compositionally biased stretch (basic and acidic residues) spans 40–54; it reads QPDRSRRGAEREDAK. N-linked (GlcNAc...) asparagine glycosylation occurs at N105. A helical transmembrane segment spans residues 135 to 155; that stretch reads LLALLLFAVGIVGSLAVMCIV. Topologically, residues 156–167 are cytoplasmic; it reads WHSYYLKSAWNS. A helical membrane pass occupies residues 168–188; that stretch reads VLASLALWDFLVLFFCLPVVT. The Extracellular portion of the chain corresponds to 189–205; that stretch reads FHEITKQRLLGAVSCRA. A disulfide bond links C203 and C286. The helical transmembrane segment at 206–226 threads the bilayer; the sequence is VPFVEVSSLGVTTFSLCALGI. Topologically, residues 227-251 are cytoplasmic; that stretch reads DRFHVATSTLPKARPIEPCPSILAK. Residues 252–272 traverse the membrane as a helical segment; it reads LAVIWVGSMTLAAPELLLWQL. Over 273–310 the chain is Extracellular; that stretch reads VREPSPAAGTVDTCIMKPSAHLPESLYSLVLTYQNARM. The chain crosses the membrane as a helical span at residues 311-331; that stretch reads WWSFGCYFCLPVLFTVTCQLV. The Cytoplasmic segment spans residues 332 to 361; sequence TWRVRGTPGRKPESRPGPQEPRGARPSSTV. The disordered stretch occupies residues 338–358; the sequence is TPGRKPESRPGPQEPRGARPS. A helical membrane pass occupies residues 362 to 382; sequence AGLAAVHALCALPENVCNVVA. At 383–398 the chain is on the extracellular side; it reads AYLSAALTRQTLELLG. Residues 399 to 419 form a helical membrane-spanning segment; the sequence is LVTQFSTFFKAALTPLLLLCV. Residues 420–482 lie on the Cytoplasmic side of the membrane; the sequence is SRPLGRAFLD…PPLLALGTPC (63 aa). The residue at position 480 (T480) is a Phosphothreonine.

The protein belongs to the G-protein coupled receptor 1 family. As to quaternary structure, interacts with the PTCH1 receptor. Post-translationally, undergoes metalloprotease-mediated cleavage which reduces its constitutive activity. Ubiquitinated.

Its subcellular location is the cell membrane. It localises to the cell projection. It is found in the cilium membrane. G-protein coupled receptor. Has been shown to bind the neuroprotective and glioprotective factor prosaposin (PSAP), leading to endocytosis followed by an ERK phosphorylation cascade. However, other studies have shown that prosaposin does not increase activity. It has been suggested that GPR37L1 is a constitutively active receptor which signals through the guanine nucleotide-binding protein G(s) subunit alpha. Participates in the regulation of postnatal cerebellar development by modulating the Shh pathway. Regulates baseline blood pressure in females and protects against cardiovascular stress in males. Mediates inhibition of astrocyte glutamate transporters and reduction in neuronal N-methyl-D-aspartate receptor activity. This chain is G-protein coupled receptor 37-like 1 (GPR37L1), found in Bos taurus (Bovine).